Here is a 147-residue protein sequence, read N- to C-terminus: Calmodulin (147 aa).

4 consecutive EF-hand domains span residues 8 to 43 (EQIA…LGLS), 44 to 79 (PSEA…QLKC), 81 to 116 (DSEQ…IGEK), and 120 to 147 (AEVD…LLSK). Ca(2+) contacts are provided by aspartate 21, aspartate 23, serine 25, serine 27, glutamate 32, aspartate 57, aspartate 59, asparagine 61, glutamate 68, aspartate 94, asparagine 96, aspartate 98, and glutamate 105.

It belongs to the calmodulin family.

Functionally, calmodulin mediates the control of a large number of enzymes, ion channels and other proteins by Ca(2+). Among the enzymes to be stimulated by the calmodulin-Ca(2+) complex are a number of protein kinases and phosphatases. The sequence is that of Calmodulin (CMD1) from Kluyveromyces lactis (strain ATCC 8585 / CBS 2359 / DSM 70799 / NBRC 1267 / NRRL Y-1140 / WM37) (Yeast).